The chain runs to 717 residues: Patatin-like phospholipase domain-containing protein AO090003000839 (717 aa).

The chain crosses the membrane as a helical span at residues 87-107 (WPFLFIVFGWITVLGFAYALT). The region spanning 277–468 (LCLSGGATFA…RTDIPIRALN (192 aa)) is the PNPLA domain. Residues 308–312 (GTSGG) carry the GXSXG motif. The Nucleophile role is filled by Ser-310. Catalysis depends on Asp-455, which acts as the Proton acceptor. The tract at residues 620-696 (VSPAQSRRKR…STGNIFQEMR (77 aa)) is disordered. The span at 639–658 (MVERLDHNLPDRQPDNKEDL) shows a compositional bias: basic and acidic residues. Low complexity predominate over residues 660-673 (DSSGIDSNVSSRDS).

Belongs to the PLPL family.

The protein resides in the membrane. Its function is as follows. Probable lipid hydrolase. The sequence is that of Patatin-like phospholipase domain-containing protein AO090003000839 from Aspergillus oryzae (strain ATCC 42149 / RIB 40) (Yellow koji mold).